The sequence spans 474 residues: Dihydrolipoyl dehydrogenase (474 aa).

FAD contacts are provided by residues 39–47 (EKDAYGGTC), lysine 56, and alanine 118. A disulfide bond links cysteine 47 and cysteine 52. Residues 186-190 (GGGYI), glutamate 209, and 275-278 (AVGR) contribute to the NAD(+) site. FAD-binding residues include aspartate 318 and alanine 326. The Proton acceptor role is filled by histidine 450.

It belongs to the class-I pyridine nucleotide-disulfide oxidoreductase family. As to quaternary structure, homodimer. It depends on FAD as a cofactor.

It localises to the cytoplasm. It catalyses the reaction N(6)-[(R)-dihydrolipoyl]-L-lysyl-[protein] + NAD(+) = N(6)-[(R)-lipoyl]-L-lysyl-[protein] + NADH + H(+). This is Dihydrolipoyl dehydrogenase (lpdA) from Halobacterium salinarum (strain ATCC 700922 / JCM 11081 / NRC-1) (Halobacterium halobium).